Reading from the N-terminus, the 502-residue chain is Galactose/methyl galactoside import ATP-binding protein MglA (502 aa).

ABC transporter domains follow at residues 10-245 (LEMT…VGRE) and 255-502 (NEPK…SRYL). 42–49 (GENGAGKS) provides a ligand contact to ATP.

The protein belongs to the ABC transporter superfamily. Galactose/methyl galactoside importer (TC 3.A.1.2.3) family. The complex is composed of one ATP-binding protein (MglA), two transmembrane proteins (MglC) and a solute-binding protein (MglB).

It localises to the cell inner membrane. The catalysed reaction is D-galactose(out) + ATP + H2O = D-galactose(in) + ADP + phosphate + H(+). The enzyme catalyses methyl beta-D-galactoside(out) + ATP + H2O = methyl beta-D-galactoside(in) + ADP + phosphate + H(+). Functionally, part of the ABC transporter complex MglABC involved in galactose/methyl galactoside import. Responsible for energy coupling to the transport system. In Vibrio cholerae serotype O1 (strain ATCC 39315 / El Tor Inaba N16961), this protein is Galactose/methyl galactoside import ATP-binding protein MglA.